The chain runs to 263 residues: MLTRRIIPCLDVKAGRVVKGISFLNHRDAGDPVQLAAFYNESGADELVFYDITASSDERNIMVEVVENVARQVFIPLTVGGGIRTVDDMYRMLRAGADKVSINTAAVLNPQLIEDGAKRFGSQCIVLSMDARRINEPGQPSQWNVFTHTGRDPRPTGLDAIEWAKRVVDLGAGELVINSMDADGTGAGYDNELLSAISQQVGVPVIASGGAGKPEHLLAALHEGKADAVLAASIFHFGTYTVEAVKEYLANQGIPMRRTPRPV.

Residues Asp11 and Asp130 contribute to the active site.

The protein belongs to the HisA/HisF family. In terms of assembly, heterodimer of HisH and HisF.

The protein resides in the cytoplasm. It carries out the reaction 5-[(5-phospho-1-deoxy-D-ribulos-1-ylimino)methylamino]-1-(5-phospho-beta-D-ribosyl)imidazole-4-carboxamide + L-glutamine = D-erythro-1-(imidazol-4-yl)glycerol 3-phosphate + 5-amino-1-(5-phospho-beta-D-ribosyl)imidazole-4-carboxamide + L-glutamate + H(+). The protein operates within amino-acid biosynthesis; L-histidine biosynthesis; L-histidine from 5-phospho-alpha-D-ribose 1-diphosphate: step 5/9. In terms of biological role, IGPS catalyzes the conversion of PRFAR and glutamine to IGP, AICAR and glutamate. The HisF subunit catalyzes the cyclization activity that produces IGP and AICAR from PRFAR using the ammonia provided by the HisH subunit. This Herpetosiphon aurantiacus (strain ATCC 23779 / DSM 785 / 114-95) protein is Imidazole glycerol phosphate synthase subunit HisF.